The primary structure comprises 610 residues: Elongation factor 4 (610 aa).

Positions 11–193 (ENIRNFSIIA…QIVEKVPAPS (183 aa)) constitute a tr-type G domain. GTP is bound by residues 23–28 (DHGKST) and 140–143 (NKID).

Belongs to the TRAFAC class translation factor GTPase superfamily. Classic translation factor GTPase family. LepA subfamily.

It localises to the cell membrane. It catalyses the reaction GTP + H2O = GDP + phosphate + H(+). In terms of biological role, required for accurate and efficient protein synthesis under certain stress conditions. May act as a fidelity factor of the translation reaction, by catalyzing a one-codon backward translocation of tRNAs on improperly translocated ribosomes. Back-translocation proceeds from a post-translocation (POST) complex to a pre-translocation (PRE) complex, thus giving elongation factor G a second chance to translocate the tRNAs correctly. Binds to ribosomes in a GTP-dependent manner. This is Elongation factor 4 from Streptococcus equi subsp. equi (strain 4047).